The primary structure comprises 254 residues: Phosphonates import ATP-binding protein PhnC (254 aa).

One can recognise an ABC transporter domain in the interval 2 to 246 (IQLKNVSKIY…VFDDIYNGGN (245 aa)). 35–42 (GLSGAGKS) lines the ATP pocket.

Belongs to the ABC transporter superfamily. Phosphonates importer (TC 3.A.1.9.1) family. As to quaternary structure, the complex is composed of two ATP-binding proteins (PhnC), two transmembrane proteins (PhnE) and a solute-binding protein (PhnD).

Its subcellular location is the cell membrane. The enzyme catalyses phosphonate(out) + ATP + H2O = phosphonate(in) + ADP + phosphate + H(+). Its function is as follows. Part of the ABC transporter complex PhnCDE involved in phosphonates import. Responsible for energy coupling to the transport system. This is Phosphonates import ATP-binding protein PhnC from Lactobacillus johnsonii (strain CNCM I-12250 / La1 / NCC 533).